The sequence spans 281 residues: CCAAT/enhancer-binding protein epsilon (281 aa).

The interval methionine 1–leucine 30 is disordered. Lysine 121 participates in a covalent cross-link: Glycyl lysine isopeptide (Lys-Gly) (interchain with G-Cter in SUMO2). Serine 181 carries the post-translational modification Phosphoserine. The bZIP domain occupies serine 204 to isoleucine 267. The basic motif stretch occupies residues arginine 208–arginine 245. The interval leucine 246–isoleucine 267 is leucine-zipper.

This sequence belongs to the bZIP family. C/EBP subfamily. Binds DNA as a homodimer and as a heterodimer. Can form stable heterodimers with CEBPA, CEBPB and CEBPD. Interacts with GATA1 and SPI1. Interacts with SMARCD2.

It localises to the nucleus. Functionally, transcriptional activator. C/EBP are DNA-binding proteins that recognize two different motifs: the CCAAT homology common to many promoters and the enhanced core homology common to many enhancers. Required for the promyelocyte-myelocyte transition in myeloid differentiation. In Rattus norvegicus (Rat), this protein is CCAAT/enhancer-binding protein epsilon (Cebpe).